The following is a 123-amino-acid chain: Fluoride-specific ion channel FluC (123 aa).

4 helical membrane passes run 5–25, 29–49, 65–85, and 94–114; these read LIIG…SGII, FGIP…VGFV, LIIT…YETF, and IKFL…IYVG. Na(+) contacts are provided by Gly72 and Thr75.

The protein belongs to the fluoride channel Fluc/FEX (TC 1.A.43) family.

It localises to the cell membrane. The enzyme catalyses fluoride(in) = fluoride(out). Its activity is regulated as follows. Na(+) is not transported, but it plays an essential structural role and its presence is essential for fluoride channel function. Its function is as follows. Fluoride-specific ion channel. Important for reducing fluoride concentration in the cell, thus reducing its toxicity. This is Fluoride-specific ion channel FluC from Methanococcus aeolicus (strain ATCC BAA-1280 / DSM 17508 / OCM 812 / Nankai-3).